Consider the following 438-residue polypeptide: uncharacterized protein (438 aa).

Histidine 59 is a Zn(2+) binding site. Catalysis depends on glutamate 62, which acts as the Proton acceptor. Residues histidine 63 and glutamate 139 each coordinate Zn(2+).

This sequence belongs to the peptidase M16 family. Zn(2+) is required as a cofactor.

This is an uncharacterized protein from Mycobacterium tuberculosis (strain CDC 1551 / Oshkosh).